Consider the following 256-residue polypeptide: Dihydroorotate dehydrogenase B (NAD(+)), electron transfer subunit (256 aa).

In terms of domain architecture, FAD-binding FR-type spans 2–100 (IRLETMKVVA…MGPQGNGFDL (99 aa)). FAD is bound by residues 51–54 (RPIS), 68–70 (IYR), and 75–76 (GT). Residues cysteine 220, cysteine 225, cysteine 228, and cysteine 243 each contribute to the [2Fe-2S] cluster site.

It belongs to the PyrK family. In terms of assembly, heterotetramer of 2 PyrK and 2 PyrD type B subunits. Requires [2Fe-2S] cluster as cofactor. It depends on FAD as a cofactor.

It functions in the pathway pyrimidine metabolism; UMP biosynthesis via de novo pathway; orotate from (S)-dihydroorotate (NAD(+) route): step 1/1. Responsible for channeling the electrons from the oxidation of dihydroorotate from the FMN redox center in the PyrD type B subunit to the ultimate electron acceptor NAD(+). This chain is Dihydroorotate dehydrogenase B (NAD(+)), electron transfer subunit, found in Streptococcus pneumoniae (strain ATCC BAA-255 / R6).